Reading from the N-terminus, the 420-residue chain is Sodium/proton antiporter 2 (420 aa).

The next 11 helical transmembrane spans lie at Ile25–Ile45, Ile60–Phe80, Ile94–Thr114, Leu136–Val156, Ile173–Leu193, Leu221–Gly241, Leu242–Ile262, Gly285–Leu305, Leu321–Ala341, Phe363–Met383, and Phe400–Leu420.

The protein belongs to the NhaD Na(+)/H(+) (TC 2.A.62) antiporter family.

It is found in the membrane. In terms of biological role, na(+)/H(+) antiporter that extrudes sodium in exchange for external protons. This chain is Sodium/proton antiporter 2, found in Arabidopsis thaliana (Mouse-ear cress).